The following is a 466-amino-acid chain: Soluble pyridine nucleotide transhydrogenase (466 aa).

36–45 is an FAD binding site; the sequence is ERYQNVGGGC.

It belongs to the class-I pyridine nucleotide-disulfide oxidoreductase family. It depends on FAD as a cofactor.

It is found in the cytoplasm. It carries out the reaction NAD(+) + NADPH = NADH + NADP(+). Its function is as follows. Conversion of NADPH, generated by peripheral catabolic pathways, to NADH, which can enter the respiratory chain for energy generation. The chain is Soluble pyridine nucleotide transhydrogenase from Escherichia coli O81 (strain ED1a).